Here is a 61-residue protein sequence, read N- to C-terminus: UPF0434 protein PSPA7_2181 (61 aa).

Belongs to the UPF0434 family.

The polypeptide is UPF0434 protein PSPA7_2181 (Pseudomonas paraeruginosa (strain DSM 24068 / PA7) (Pseudomonas aeruginosa (strain PA7))).